The primary structure comprises 395 residues: Elongation factor Tu (395 aa).

Positions 10–204 (LPHVNIGTIG…AVDEYIPTPQ (195 aa)) constitute a tr-type G domain. A G1 region spans residues 19-26 (GHVDHGKT). A GTP-binding site is contributed by 19–26 (GHVDHGKT). Thr26 is a Mg(2+) binding site. A G2 region spans residues 60–64 (GITIN). Residues 81–84 (DCPG) form a G3 region. Residues 81–85 (DCPGH) and 136–139 (NKCD) each bind GTP. Residues 136 to 139 (NKCD) are G4. The G5 stretch occupies residues 174 to 176 (SAL).

Belongs to the TRAFAC class translation factor GTPase superfamily. Classic translation factor GTPase family. EF-Tu/EF-1A subfamily. Monomer.

It localises to the cytoplasm. It catalyses the reaction GTP + H2O = GDP + phosphate + H(+). Its function is as follows. GTP hydrolase that promotes the GTP-dependent binding of aminoacyl-tRNA to the A-site of ribosomes during protein biosynthesis. This is Elongation factor Tu from Mycoplasma capricolum subsp. capricolum (strain California kid / ATCC 27343 / NCTC 10154).